A 179-amino-acid polypeptide reads, in one-letter code: Replication restart protein DnaT (179 aa).

Positions 156 to 179 (GGLPKRDVNTVSEPDSQIPPGFRG) are disordered.

The protein belongs to the DnaT family. In terms of assembly, homooligomerizes. Interacts with PriB. Component of the replication restart primosome. Primosome assembly occurs via a 'hand-off' mechanism. PriA binds to replication forks, subsequently PriB then DnaT bind; DnaT then displaces ssDNA to generate the helicase loading substrate.

Involved in the restart of stalled replication forks, which reloads the replicative helicase on sites other than the origin of replication. Can function in multiple replication restart pathways. Displaces ssDNA from a PriB-ssDNA complex. Probably forms a spiral filament on ssDNA. In Escherichia coli O1:K1 / APEC, this protein is Replication restart protein DnaT.